The following is an 861-amino-acid chain: Alpha-actinin A (861 aa).

The segment at 1 to 239 is actin-binding; sequence MSEEPTPVSG…VMTYVAQYYH (239 aa). Calponin-homology (CH) domains are found at residues 22 to 127 and 136 to 242; these read ITQK…LRFA and LSAK…HHFS. Spectrin repeat units lie at residues 240–365, 366–480, 481–601, and 602–714; these read HFSA…ALEK, AEQE…TGVK, SSAE…EERK, and VQLA…EQVV. EF-hand domains lie at 729–764 and 765–800; these read EELS…IGDE and LTEE…SRKG. The Ca(2+) site is built by D742, D744, D746, K748, E753, D778, D780, N782, T784, and E789.

It belongs to the alpha-actinin family. In terms of assembly, homodimer; antiparallel.

It localises to the cytoplasm. The protein localises to the cell cortex. The protein resides in the contractile vacuole. Its subcellular location is the cytoplasmic vesicle. It is found in the phagosome. In terms of biological role, F-actin cross-linking protein which is thought to anchor actin to a variety of intracellular structures. This is a bundling protein. Increases the actin-stimulated ATPase activity of myosin. Involved in vegetative cell growth, phagocytosis, motility and development, probably through stabilization of the actin network in the cortical cytoskeleton. The protein is Alpha-actinin A (abpA) of Dictyostelium discoideum (Social amoeba).